A 200-amino-acid chain; its full sequence is Transcription elongation factor A protein-like 6 (200 aa).

The tract at residues 1 to 200 (MEKPYNKNEG…QRGLHDIPYL (200 aa)) is disordered. Positions 20 to 36 (DEVEPDDEGKSDEEEKP) are enriched in acidic residues. Position 30 is a phosphoserine (S30). 3 stretches are compositionally biased toward basic and acidic residues: residues 37–52 (DAEG…KAEG), 60–80 (LEDK…KPQG), and 115–154 (DRGT…EELR). S65 carries the post-translational modification Phosphoserine.

It belongs to the TFS-II family. TFA subfamily.

Its subcellular location is the nucleus. Its function is as follows. May be involved in transcriptional regulation. This is Transcription elongation factor A protein-like 6 (TCEAL6) from Homo sapiens (Human).